A 587-amino-acid chain; its full sequence is Formate--tetrahydrofolate ligase (587 aa).

ATP is bound at residue threonine 73 to serine 80.

It belongs to the formate--tetrahydrofolate ligase family.

The catalysed reaction is (6S)-5,6,7,8-tetrahydrofolate + formate + ATP = (6R)-10-formyltetrahydrofolate + ADP + phosphate. Its pathway is one-carbon metabolism; tetrahydrofolate interconversion. This Desulfosudis oleivorans (strain DSM 6200 / JCM 39069 / Hxd3) (Desulfococcus oleovorans) protein is Formate--tetrahydrofolate ligase.